The sequence spans 324 residues: MLQHILLYLINPLAYIVPILLATAFLTLVERKILGYMQFRKGPNIVGPYGLLQPIADGVKLFIKEPVRPSTSSPFLFLATPTLALTLALLMWMPLPLPHAIINLNLGLLFILAVSSLTVYTILGSGWASNSKYALMGALRAVAQTISYEVSLGLILLSMIIFTGGFTLHTFNLTQETVWLLVPGWPLAMMWYISTLAETNRAPFDLTEGESELVSGFNVEYAGGSFALFFLAEYTNILMMNTLSVILFMGSSYDPTMPQISTFYLMMKATLLTLIFLWIRASYPRFRYDQLMHLVWKNFLPLTLALILWHAALPIATASLPPLT.

Transmembrane regions (helical) follow at residues 5–25 (ILLY…ATAF), 75–95 (FLFL…WMPL), 106–126 (LGLL…LGSG), 146–166 (ISYE…TGGF), 177–197 (TVWL…STLA), 228–248 (LFFL…VILF), 259–279 (QIST…FLWI), and 299–319 (FLPL…ATAS).

Belongs to the complex I subunit 1 family.

Its subcellular location is the mitochondrion inner membrane. The catalysed reaction is a ubiquinone + NADH + 5 H(+)(in) = a ubiquinol + NAD(+) + 4 H(+)(out). Core subunit of the mitochondrial membrane respiratory chain NADH dehydrogenase (Complex I) that is believed to belong to the minimal assembly required for catalysis. Complex I functions in the transfer of electrons from NADH to the respiratory chain. The immediate electron acceptor for the enzyme is believed to be ubiquinone. The sequence is that of NADH-ubiquinone oxidoreductase chain 1 (MT-ND1) from Squalus acanthias (Spiny dogfish).